Here is a 292-residue protein sequence, read N- to C-terminus: Peroxisomal 2,4-dienoyl-CoA reductase [(3E)-enoyl-CoA-producing] (292 aa).

A2 carries the N-acetylalanine modification. NADP(+) contacts are provided by residues 35 to 40, 60 to 64, and D86; these read GGGSGI and RSLPR. R60 contacts substrate. Substrate is bound by residues R88, F118, and 126–128; that span reads SFN. At K151 the chain carries N6-acetyllysine. NADP(+)-binding positions include K182 and 208 to 214; that span reads PGPISGT. R219 lines the substrate pocket. Position 287 is a phosphoserine (S287). Positions 290–292 match the Microbody targeting signal motif; that stretch reads AKL. K291 is modified (N6-acetyllysine).

It belongs to the short-chain dehydrogenases/reductases (SDR) family. 2,4-dienoyl-CoA reductase subfamily. In terms of assembly, monomer, dimer and oligomer.

Its subcellular location is the peroxisome. It carries out the reaction a (2E,4Z)-dienoyl-CoA + NADPH + H(+) = a 4,5-saturated-(3E)-enoyl-CoA + NADP(+). It catalyses the reaction a (2E,4E)-dienoyl-CoA + NADPH + H(+) = a 4,5-saturated-(3E)-enoyl-CoA + NADP(+). The catalysed reaction is (2E,4E)-hexadienoyl-CoA + NADPH + H(+) = (3E)-hexenoyl-CoA + NADP(+). The enzyme catalyses (2E,4E)-decadienoyl-CoA + NADPH + H(+) = (3E)-decenoyl-CoA + NADP(+). It carries out the reaction (2E,4Z,7Z,10Z,13Z,16Z,19Z)-docosaheptaenoyl-CoA + NADPH + H(+) = (3E,7Z,10Z,13Z,16Z,19Z)-docosahexaenoyl-CoA + NADP(+). Auxiliary enzyme of beta-oxidation. Participates in the degradation of unsaturated fatty enoyl-CoA esters having double bonds in both even- and odd-numbered positions in peroxisome. Catalyzes the NADP-dependent reduction of 2,4-dienoyl-CoA to yield trans-3-enoyl-CoA. Has activity towards short and medium chain 2,4-dienoyl-CoAs, but also towards 2,4,7,10,13,16,19-docosaheptaenoyl-CoA, suggesting that it does not constitute a rate limiting step in the peroxisomal degradation of docosahexaenoic acid. The polypeptide is Peroxisomal 2,4-dienoyl-CoA reductase [(3E)-enoyl-CoA-producing] (DECR2) (Pongo abelii (Sumatran orangutan)).